A 384-amino-acid polypeptide reads, in one-letter code: 5-amino-6-(D-ribitylamino)uracil--L-tyrosine 4-hydroxyphenyl transferase 2 (384 aa).

The 234-residue stretch at 53–286 folds into the Radical SAM core domain; that stretch reads VSYVVNRNIY…IAISRVILHT (234 aa). Positions 67, 71, and 74 each coordinate [4Fe-4S] cluster.

The protein belongs to the radical SAM superfamily. CofH family. As to quaternary structure, consists of two subunits, CofG and CofH. Requires [4Fe-4S] cluster as cofactor.

It carries out the reaction 5-amino-6-(D-ribitylamino)uracil + L-tyrosine + S-adenosyl-L-methionine = 5-amino-5-(4-hydroxybenzyl)-6-(D-ribitylimino)-5,6-dihydrouracil + 2-iminoacetate + 5'-deoxyadenosine + L-methionine + H(+). Its pathway is cofactor biosynthesis; coenzyme F0 biosynthesis. Its function is as follows. Catalyzes the radical-mediated synthesis of 5-amino-5-(4-hydroxybenzyl)-6-(D-ribitylimino)-5,6-dihydrouracil from 5-amino-6-(D-ribitylamino)uracil and L-tyrosine. This chain is 5-amino-6-(D-ribitylamino)uracil--L-tyrosine 4-hydroxyphenyl transferase 2, found in Methanosarcina mazei (strain ATCC BAA-159 / DSM 3647 / Goe1 / Go1 / JCM 11833 / OCM 88) (Methanosarcina frisia).